The following is a 36-amino-acid chain: MHAHFDRKILNFKPVTVNVIRYCLQFSFKAVTFLLI.

This is an uncharacterized protein from Saccharomyces cerevisiae (strain ATCC 204508 / S288c) (Baker's yeast).